Reading from the N-terminus, the 369-residue chain is MICFDRLKKAFSNFLDKISGEENKKEPETRQTDQLESKKEETIQQQQNVQQPQAENKIEQKQEKISVQTGQENKQENKRSFFDFLKYKTIKEDDLNDVIEELRFQLLDSDVSYEVTEKILEDLKNNLIGKKVSRREEVEEIVINTLKKSITEILTKNQKTDLIEKIRSSGKKPFVIIFFGVNGVGKTTTIAKVVNMLKKNNLSTIIAASDTFRAAAQEQLAYHASKLEVQLIRGKYGADPASVAFDAISFAKSRNIDVVLIDTAGRMHIDSDLVEELKRVLRIAKPDFRILILDSLAGSDALEQARHFENNVGYDAVILTKVDADAKGGIALSLAYELKKPVVYMGVGQNYDDLIPFSPDWFVERIFSS.

Positions 20-42 (GEENKKEPETRQTDQLESKKEET) are enriched in basic and acidic residues. Residues 20–58 (GEENKKEPETRQTDQLESKKEETIQQQQNVQQPQAENKI) form a disordered region. Residues 44-53 (QQQQNVQQPQ) are compositionally biased toward low complexity. GTP contacts are provided by residues 180 to 187 (GVNGVGKT), 262 to 266 (DTAGR), and 320 to 323 (TKVD).

This sequence belongs to the GTP-binding SRP family. FtsY subfamily. In terms of assembly, part of the signal recognition particle protein translocation system, which is composed of SRP and FtsY.

Its subcellular location is the cell membrane. It is found in the cytoplasm. It catalyses the reaction GTP + H2O = GDP + phosphate + H(+). Involved in targeting and insertion of nascent membrane proteins into the cytoplasmic membrane. Acts as a receptor for the complex formed by the signal recognition particle (SRP) and the ribosome-nascent chain (RNC). In Sulfolobus acidocaldarius (strain ATCC 33909 / DSM 639 / JCM 8929 / NBRC 15157 / NCIMB 11770), this protein is Signal recognition particle receptor FtsY.